Reading from the N-terminus, the 74-residue chain is MKISYFLLLILSLGSSQINPVSGDDSIQCFQKNNTCHTNQCPYFQDEIGTCYDKRGKCCQKRLLHIRVPRKKKV.

A signal peptide spans 1–23 (MKISYFLLLILSLGSSQINPVSG). Cystine bridges form between Cys-29/Cys-58, Cys-36/Cys-51, and Cys-41/Cys-59.

The protein belongs to the beta-defensin family. Only expressed in epididymis (caput, corpus and cauda).

It is found in the secreted. In terms of biological role, has antibacterial activity. This chain is Beta-defensin 39 (Defb39), found in Mus musculus (Mouse).